Consider the following 119-residue polypeptide: uncharacterized protein (119 aa).

A helical membrane pass occupies residues 74-91; that stretch reads LSVHFLLNVISAILSMLI.

The protein resides in the membrane. This is an uncharacterized protein from Schizosaccharomyces pombe (strain 972 / ATCC 24843) (Fission yeast).